The sequence spans 622 residues: Mitochondrial distribution and morphology protein 34 (622 aa).

The SMP-LTD domain occupies 1 to 195 (MAFNFNWSPL…LPAIIHRLSL (195 aa)). Disordered regions lie at residues 211–234 (QVTN…DPVD), 303–322 (PSGL…SHVA), 355–432 (SMGA…IRQP), 445–464 (ERNA…PASR), 482–546 (SLQQ…QTHL), and 581–622 (KMGG…AYRH). Over residues 214-225 (NPPLEGPGLDPL) the composition is skewed to low complexity. The segment covering 360-372 (RHSKAHARKRKKR) has biased composition (basic residues). Basic and acidic residues predominate over residues 373–384 (VVDLRRRPKNTD). Positions 388-404 (SVSGESEFTESTSAASV) are enriched in low complexity. Composition is skewed to polar residues over residues 482–495 (SLQQ…SKSL) and 522–532 (NASNYTSSGDS). Low complexity-rich tracts occupy residues 533–543 (QQQQQQQQQHQ) and 592–601 (NNKNDNKNNN).

It belongs to the MDM34 family. As to quaternary structure, component of the ER-mitochondria encounter structure (ERMES) or MDM complex, composed of MMM1, MDM10, MDM12 and MDM34.

It localises to the mitochondrion outer membrane. Component of the ERMES/MDM complex, which serves as a molecular tether to connect the endoplasmic reticulum (ER) and mitochondria. Components of this complex are involved in the control of mitochondrial shape and protein biogenesis, and function in nonvesicular lipid trafficking between the ER and mitochondria. MDM34 is required for the interaction of the ER-resident membrane protein MMM1 and the outer mitochondrial membrane-resident beta-barrel protein MDM10. The sequence is that of Mitochondrial distribution and morphology protein 34 from Ajellomyces capsulatus (strain G186AR / H82 / ATCC MYA-2454 / RMSCC 2432) (Darling's disease fungus).